The chain runs to 504 residues: Doublesex- and mab-3-related transcription factor A1 (504 aa).

The segment covering Met1–Val13 has biased composition (basic and acidic residues). Positions Met1–Ala27 are disordered. The DM DNA-binding region spans Cys97–Arg144. Disordered stretches follow at residues Gly170 to Ala192 and Ser266 to Glu307. Residues Arg293–Ser306 show a composition bias toward low complexity. A DMA domain is found at Arg327 to Gln362.

This sequence belongs to the DMRT family. Expressed in liver, kidney, pancreas, prostate and weakly detected in testis and ovary.

The protein resides in the nucleus. In Homo sapiens (Human), this protein is Doublesex- and mab-3-related transcription factor A1 (DMRTA1).